The chain runs to 321 residues: Calcium-binding protein LPS1-alpha (321 aa).

EF-hand domains lie at 15-49, 47-82, 85-120, 121-156, 165-200, 200-233, 232-267, and 269-304; these read DAIE…NWTE, WTEE…STKE, YSSD…IYTK, VVDG…KLPI, EYRE…STKY, YSDK…DGVS, VSKD…IYRQ, and VDFE…NCPY. Residues aspartate 29, asparagine 31, aspartate 33, threonine 35, glutamate 40, aspartate 60, asparagine 62, aspartate 64, histidine 66, glutamate 71, aspartate 98, aspartate 100, asparagine 102, arginine 104, glutamate 109, aspartate 134, aspartate 136, aspartate 138, histidine 140, glutamate 145, aspartate 178, asparagine 180, aspartate 182, serine 184, glutamate 189, aspartate 213, asparagine 215, aspartate 217, arginine 219, glutamate 224, aspartate 245, aspartate 247, asparagine 249, lysine 251, glutamate 256, aspartate 284, aspartate 286, tyrosine 288, and glutamate 293 each contribute to the Ca(2+) site.

As to expression, aboral ectoderm, a squamous epithelium covering the surface of the late stage embryo and larva.

Calcium-binding protein involved in larval development and metamorphosis. Likely to function as calcium buffers mediating the transport of calcium from the sea water to the blastocoel where calcium is required for skeleton formation. This is Calcium-binding protein LPS1-alpha from Lytechinus pictus (Painted sea urchin).